The sequence spans 504 residues: Protein phosphatase 1J (504 aa).

2 disordered regions span residues 1-102 and 194-217; these read MLNR…RLPW and PLCL…SPQS. The segment covering 14–23 has biased composition (low complexity); sequence SSSGTSSQRS. Position 41 is a phosphothreonine (T41). Positions 59-73 are enriched in polar residues; that stretch reads TAETPVSFSRPTFLQ. Residues S65 and S75 each carry the phosphoserine modification. The 394-residue stretch at 103–496 folds into the PPM-type phosphatase domain; it reads STGYAEVINA…DDISVFVIPL (394 aa). Residues 197–217 are compositionally biased toward low complexity; that stretch reads LPSTPGTPGVSSPSQLVSPQS.

The protein belongs to the PP2C family. Interacts with UBE2I/UBC9.

It catalyses the reaction O-phospho-L-seryl-[protein] + H2O = L-seryl-[protein] + phosphate. The enzyme catalyses O-phospho-L-threonyl-[protein] + H2O = L-threonyl-[protein] + phosphate. The polypeptide is Protein phosphatase 1J (Ppm1j) (Rattus norvegicus (Rat)).